The chain runs to 88 residues: Putative membrane protein insertion efficiency factor (88 aa).

Positions 64-88 (GVDPVPKKSSSKKTSSTTACGCGHS) are disordered.

Belongs to the UPF0161 family.

The protein localises to the cell inner membrane. Its function is as follows. Could be involved in insertion of integral membrane proteins into the membrane. This chain is Putative membrane protein insertion efficiency factor, found in Herminiimonas arsenicoxydans.